The chain runs to 474 residues: Transcription factor SOX-4 (474 aa).

The segment covering 1–10 (MVQQTNNAEN) has biased composition (polar residues). Residues 1–58 (MVQQTNNAENTEALLAGESSDSGAGLELGIASSPTPGSTASTGGKADDPSWCKTPSGH) are disordered. Residues 31–44 (ASSPTPGSTASTGG) show a composition bias toward low complexity. The HMG box DNA-binding region spans 59–127 (IKRPMNAFMV…KHMADYPDYK (69 aa)). Lysine 95 bears the N6-acetyllysine mark. Disordered regions lie at residues 128 to 228 (YRPR…GGGK), 262 to 286 (ARTPSASASASSAASASAALAAPGK), and 302 to 416 (LGTS…NFES). Positions 138–149 (NANSSSSAAASS) are enriched in low complexity. Gly residues predominate over residues 158–189 (VGGSGGGGHGGGGGGGSSNAGGGGGGASGGGA). 4 stretches are compositionally biased toward low complexity: residues 266–283 (SASASASSAASASAALAA), 304–320 (TSSSPVGGVGAGADPSD), 336–354 (APSLSGRSSAASSPAAGRS), and 366–396 (AASPAPSSAPSHASSSASSHSSSSSSSGSSS). A compositionally biased stretch (acidic residues) spans 397–406 (SDDEFEDDLL). The segment covering 407 to 416 (DLNPSSNFES) has biased composition (low complexity). A 9aaTAD motif is present at residues 426-434 (SALDRDLDF).

Interacts with UBE2I. Interacts with HDAC1; interaction inhibits the transcriptional activator activity. Acetylation at Lys-95 by KAT5 promotes the transcription activator activity and is required during myoblast differentiation. Acetylation by KAT5 abolishes the interaction between SOX4 and HDAC1 and switches SOX4 into a transcriptional activator. Testis, brain, and heart.

The protein resides in the nucleus. Functionally, transcriptional activator that binds with high affinity to the T-cell enhancer motif 5'-AACAAAG-3' motif. Required for IL17A-producing Vgamma2-positive gamma-delta T-cell maturation and development, via binding to regulator loci of RORC to modulate expression. Involved in skeletal myoblast differentiation by promoting gene expression of CALD1. The sequence is that of Transcription factor SOX-4 from Homo sapiens (Human).